The following is a 204-amino-acid chain: MSDRIARIERTTRESSIVVELNLDGTGIVDVSTGVPFFDHMLNALGTHASFDLDVKAKGDVEIDAHHTVEDTAIVFGQALGQALGDKKGIRRFGDAFIPMDETLAHASVDVSGRPYCVHTGEPDYMVHSVIGGYPGVPYHAVINRHVFESIALNARIALHVRVLYGRDQHHITEAEYKAVARALREAVEPDPRVSGVPSTKGTL.

It belongs to the imidazoleglycerol-phosphate dehydratase family.

Its subcellular location is the cytoplasm. The enzyme catalyses D-erythro-1-(imidazol-4-yl)glycerol 3-phosphate = 3-(imidazol-4-yl)-2-oxopropyl phosphate + H2O. Its pathway is amino-acid biosynthesis; L-histidine biosynthesis; L-histidine from 5-phospho-alpha-D-ribose 1-diphosphate: step 6/9. The chain is Imidazoleglycerol-phosphate dehydratase from Rhodococcus erythropolis (strain PR4 / NBRC 100887).